A 120-amino-acid polypeptide reads, in one-letter code: rRNA-processing protein CGR1 (120 aa).

Disordered regions lie at residues 1–26 (MVNE…KAEK) and 81–120 (ERRE…LKER). A coiled-coil region spans residues 47-106 (KKQKRLEDKQFKERLKALKDEKEEARQAKITMLKERREKKEENERYERLAAKMHAKKVER). Residues 81–96 (ERREKKEENERYERLA) show a composition bias toward basic and acidic residues. A compositionally biased stretch (basic residues) spans 97-113 (AKMHAKKVERMRRREKR).

The protein belongs to the CGR1 family.

The protein localises to the nucleus. The protein resides in the nucleolus. Functionally, involved in nucleolar integrity and required for processing of the pre-rRNA for the 60S ribosome subunit. In Saccharomyces cerevisiae (strain ATCC 204508 / S288c) (Baker's yeast), this protein is rRNA-processing protein CGR1 (CGR1).